The primary structure comprises 258 residues: Undecaprenyl-diphosphatase (258 aa).

8 helical membrane passes run 14–34 (AAGE…PWLL), 39–59 (QGLT…LIYF), 79–99 (GKIL…GVLF), 106–126 (VFRS…ILHL), 136–156 (VALN…ALMP), 176–196 (AESA…AAVL), 209–229 (AFIA…KFLM), and 237–257 (FNIF…TALM).

Belongs to the UppP family.

The protein resides in the cell membrane. It carries out the reaction di-trans,octa-cis-undecaprenyl diphosphate + H2O = di-trans,octa-cis-undecaprenyl phosphate + phosphate + H(+). Functionally, catalyzes the dephosphorylation of undecaprenyl diphosphate (UPP). Confers resistance to bacitracin. The chain is Undecaprenyl-diphosphatase from Elusimicrobium minutum (strain Pei191).